Reading from the N-terminus, the 157-residue chain is Transcription elongation factor GreA (157 aa).

Residues 17–37 (ELERLLKLRPQISEAIAEARE) are a coiled coil.

It belongs to the GreA/GreB family.

Functionally, necessary for efficient RNA polymerase transcription elongation past template-encoded arresting sites. The arresting sites in DNA have the property of trapping a certain fraction of elongating RNA polymerases that pass through, resulting in locked ternary complexes. Cleavage of the nascent transcript by cleavage factors such as GreA or GreB allows the resumption of elongation from the new 3'terminus. GreA releases sequences of 2 to 3 nucleotides. This chain is Transcription elongation factor GreA, found in Vibrio parahaemolyticus serotype O3:K6 (strain RIMD 2210633).